A 435-amino-acid chain; its full sequence is Eukaryotic translation initiation factor 3 subunit E (435 aa).

Residues 219 to 392 form the PCI domain; the sequence is FFNHPKGRDL…GHVVMGTQPL (174 aa).

It belongs to the eIF-3 subunit E family. Component of the eukaryotic translation initiation factor 3 (eIF-3) complex. The eIF-3 complex interacts with pix. Interacts with mxt.

Its subcellular location is the cytoplasm. In terms of biological role, component of the eukaryotic translation initiation factor 3 (eIF-3) complex, which is involved in protein synthesis of a specialized repertoire of mRNAs and, together with other initiation factors, stimulates binding of mRNA and methionyl-tRNAi to the 40S ribosome. The eIF-3 complex specifically targets and initiates translation of a subset of mRNAs involved in cell proliferation. The chain is Eukaryotic translation initiation factor 3 subunit E (eIF3-S6) from Drosophila erecta (Fruit fly).